A 255-amino-acid polypeptide reads, in one-letter code: Flagellar brake protein YcgR (255 aa).

The region spanning 122 to 240 is the PilZ domain; it reads QRRTYFRINT…ERDLQQVIFE (119 aa).

Belongs to the YcgR family. In terms of assembly, monomer. Interacts with the flagellar basal bodies.

It is found in the bacterial flagellum basal body. In terms of biological role, acts as a flagellar brake, regulating swimming and swarming in a bis-(3'-5') cyclic diguanylic acid (c-di-GMP)-dependent manner. Binds 1 c-di-GMP dimer per subunit. Increasing levels of c-di-GMP lead to decreased motility. This chain is Flagellar brake protein YcgR, found in Pectobacterium carotovorum subsp. carotovorum (strain PC1).